Reading from the N-terminus, the 359-residue chain is Guanine nucleotide-binding protein alpha-4 subunit (359 aa).

The N-myristoyl glycine moiety is linked to residue Gly-2. Residue Cys-3 is the site of S-palmitoyl cysteine attachment. The G-alpha domain occupies 31–359; it reads TEVKLLLLGA…RYNLKDCGLF (329 aa). The tract at residues 34–47 is G1 motif; it reads KLLLLGAGESGKST. Residues 39–46, 178–184, 203–207, 272–275, and Ala-331 contribute to the GTP site; these read GAGESGKS, LRARVKS, DVGGQ, and NKMD. Ser-46 serves as a coordination point for Mg(2+). The interval 176 to 184 is G2 motif; the sequence is DILRARVKS. A G3 motif region spans residues 199 to 208; it reads FRMFDVGGQR. Residues 268 to 275 form a G4 motif region; the sequence is ILFLNKMD. Positions 329–334 are G5 motif; the sequence is TCATDT.

This sequence belongs to the G-alpha family. G(i/o/t/z) subfamily. As to quaternary structure, g proteins are composed of 3 units; alpha, beta and gamma. The alpha chain contains the guanine nucleotide binding site.

Its function is as follows. Guanine nucleotide-binding proteins (G proteins) are involved as modulators or transducers in various transmembrane signaling systems. The sequence is that of Guanine nucleotide-binding protein alpha-4 subunit (gpa-4) from Caenorhabditis briggsae.